The sequence spans 681 residues: Spermatogenesis-associated protein 21 (681 aa).

The span at 1–14 (MENRNTHTHPESKA) shows a compositional bias: basic and acidic residues. Disordered stretches follow at residues 1-284 (MENR…ANSR) and 298-336 (EEATHRRTLKSRGLTARRSPKTVTSVSTSGPISSSVPTL). 2 stretches are compositionally biased toward polar residues: residues 83–94 (QEPSARPRTTQD) and 159–173 (PSNSRSQPLKNNSPS). The segment covering 251-261 (PEERDTEKKEL) has biased composition (basic and acidic residues). Over residues 264-281 (GQKQRQQALSAAGTQGPA) the composition is skewed to polar residues. The span at 319–335 (TVTSVSTSGPISSSVPT) shows a compositional bias: low complexity. The 36-residue stretch at 464-499 (FTPAQVEEALMSADVNGDGHVDFKDFLAVMTDTKRF) folds into the EF-hand domain. Ca(2+) contacts are provided by Asp-477, Asn-479, Asp-481, His-483, and Asp-488. The interval 653 to 681 (LFFQPGQQGSREHSSDSRKWLSSMPARTH) is disordered. Over residues 662 to 671 (SREHSSDSRK) the composition is skewed to basic and acidic residues.

Involved in the differentiation of haploid spermatids. The sequence is that of Spermatogenesis-associated protein 21 (Spata21) from Mus musculus (Mouse).